A 946-amino-acid chain; its full sequence is Bifunctional lysine-specific demethylase and histidyl-hydroxylase NO66 (946 aa).

The tract at residues 14–435 (YRGSATSKNY…TSAASKKNTV (422 aa)) is disordered. Polar residues-rich tracts occupy residues 17–28 (SATSKNYVQKGT) and 37–46 (AKNNNRNLAS). Low complexity predominate over residues 59–73 (SGSYSDGDNGSSSSS). Over residues 99–110 (TLNNHSSQSSPE) the composition is skewed to polar residues. Positions 117 to 128 (ESLKRRNDEAEG) are enriched in basic and acidic residues. Polar residues predominate over residues 169–186 (TLNSHSSQSSPETPANTR). The span at 187 to 198 (ESLKRRTDEAEG) shows a compositional bias: basic and acidic residues. Polar residues predominate over residues 239-256 (TLNSHSYQSSPETPANTR). Basic and acidic residues predominate over residues 257-268 (ESLKRRTDEAEG). Thr309 is modified (phosphothreonine). Positions 309 to 327 (TLNSHSSQSSPETPANTRE) are enriched in polar residues. The span at 328-338 (SLNRRNYEAEG) shows a compositional bias: basic and acidic residues. The residue at position 339 (Ser339) is a Phosphoserine. Positions 379–397 (TLNSHSSQSSPETPANTRE) are enriched in polar residues. Positions 398–408 (SLNRRNYEAEG) are enriched in basic and acidic residues. A compositionally biased stretch (polar residues) spans 416–433 (RTSSTPVGQSTSAASKKN). The 137-residue stretch at 606–742 (NPSSYLVQLR…NLMEKLMPLV (137 aa)) folds into the JmjC domain. Residues His646, Asp648, and His708 each contribute to the Fe cation site.

This sequence belongs to the ROX family. NO66 subfamily. Requires Fe(2+) as cofactor.

The protein localises to the nucleus. The catalysed reaction is N(6),N(6)-dimethyl-L-lysyl(36)-[histone H3] + 2 2-oxoglutarate + 2 O2 = L-lysyl(36)-[histone H3] + 2 formaldehyde + 2 succinate + 2 CO2. In terms of biological role, oxygenase that can act as both a histone lysine demethylase and a ribosomal histidine hydroxylase. Specifically demethylates 'Lys-4' (H3K4me) and 'Lys-36' (H3K36me) of histone H3, thereby playing a central role in histone code. This chain is Bifunctional lysine-specific demethylase and histidyl-hydroxylase NO66, found in Drosophila pseudoobscura pseudoobscura (Fruit fly).